Consider the following 224-residue polypeptide: Large ribosomal subunit protein bL25 (224 aa).

A disordered region spans residues 195–224 (TVEEVDEAAEVDAADVPATEQGTDESKDGE). Over residues 197–207 (EEVDEAAEVDA) the composition is skewed to acidic residues.

This sequence belongs to the bacterial ribosomal protein bL25 family. CTC subfamily. As to quaternary structure, part of the 50S ribosomal subunit; part of the 5S rRNA/L5/L18/L25 subcomplex. Contacts the 5S rRNA. Binds to the 5S rRNA independently of L5 and L18.

This is one of the proteins that binds to the 5S RNA in the ribosome where it forms part of the central protuberance. This is Large ribosomal subunit protein bL25 from Psychrobacter cryohalolentis (strain ATCC BAA-1226 / DSM 17306 / VKM B-2378 / K5).